Consider the following 266-residue polypeptide: Phosphatidylglycerol--prolipoprotein diacylglyceryl transferase (266 aa).

7 helical membrane-spanning segments follow: residues 10-30 (VAIALGPLKIHWYGLMYLVGI), 56-76 (LVFWVAMGVILGGRLGYVFFY), 92-112 (WEGGMSFHGGLIGVMLATWWF), 120-140 (FFELMDFIAPLVPIGLGAGRI), 172-192 (PSQLYQFALEGVALFTILWFY), 200-220 (MAVSGMFAACYGVFRFIVEFV), and 234-254 (WLTMGQILCLPMILGGIGLIA). Residue Arg-139 coordinates a 1,2-diacyl-sn-glycero-3-phospho-(1'-sn-glycerol).

Belongs to the Lgt family.

It is found in the cell inner membrane. It carries out the reaction L-cysteinyl-[prolipoprotein] + a 1,2-diacyl-sn-glycero-3-phospho-(1'-sn-glycerol) = an S-1,2-diacyl-sn-glyceryl-L-cysteinyl-[prolipoprotein] + sn-glycerol 1-phosphate + H(+). It participates in protein modification; lipoprotein biosynthesis (diacylglyceryl transfer). Catalyzes the transfer of the diacylglyceryl group from phosphatidylglycerol to the sulfhydryl group of the N-terminal cysteine of a prolipoprotein, the first step in the formation of mature lipoproteins. The chain is Phosphatidylglycerol--prolipoprotein diacylglyceryl transferase from Ectopseudomonas mendocina (strain ymp) (Pseudomonas mendocina).